Reading from the N-terminus, the 285-residue chain is MMTAETKGRAACLIGWPAAHSRSPLIHHYWLRLHGIAGGYNIEAIPPEGLAEFIMHLSTHGFVGANVTIPHKERALQLTAPDERARAIGAANTLYYDGKTLRSTNTDVEGFIGNLDAAAPGWDRTGDALVLGAGGSSRAVVFGLIERGIKRIHLVNRTMERAQALADQFGATVMPLAWSGLGDVLPRAGLLVNTTSLGMKGQPPLDIELPLLPLDAVVADLVYVPLETPLLAAARARGLRTADGLGMLLHQAVRGFELWFGQRPAVSPELRALVEADLRIPHPAT.

Shikimate-binding positions include 21–23 (SRS) and threonine 68. Residue lysine 72 is the Proton acceptor of the active site. Glutamate 83 serves as a coordination point for NADP(+). Shikimate is bound by residues asparagine 92 and aspartate 107. NADP(+)-binding positions include 132 to 136 (GAGGS), 156 to 161 (NRTMER), and leucine 221. Residue tyrosine 223 coordinates shikimate. An NADP(+)-binding site is contributed by glycine 244.

This sequence belongs to the shikimate dehydrogenase family. As to quaternary structure, homodimer.

It carries out the reaction shikimate + NADP(+) = 3-dehydroshikimate + NADPH + H(+). Its pathway is metabolic intermediate biosynthesis; chorismate biosynthesis; chorismate from D-erythrose 4-phosphate and phosphoenolpyruvate: step 4/7. Involved in the biosynthesis of the chorismate, which leads to the biosynthesis of aromatic amino acids. Catalyzes the reversible NADPH linked reduction of 3-dehydroshikimate (DHSA) to yield shikimate (SA). This is Shikimate dehydrogenase (NADP(+)) from Nitrobacter hamburgensis (strain DSM 10229 / NCIMB 13809 / X14).